Here is a 469-residue protein sequence, read N- to C-terminus: Sulfate adenylyltransferase subunit 1 (469 aa).

A tr-type G domain is found at 22-238 (KQLLRFITCG…LETIKIDEDR (217 aa)). Residues 31-38 (GSVDDGKS) are G1. 31 to 38 (GSVDDGKS) is a binding site for GTP. The G2 stretch occupies residues 89–93 (GITID). The G3 stretch occupies residues 110–113 (DTPG). GTP is bound by residues 110 to 114 (DTPGH) and 165 to 168 (NKMD). The interval 165-168 (NKMD) is G4. Residues 203–205 (SAL) form a G5 region.

The protein belongs to the TRAFAC class translation factor GTPase superfamily. Classic translation factor GTPase family. CysN/NodQ subfamily. Heterodimer composed of CysD, the smaller subunit, and CysN.

The catalysed reaction is sulfate + ATP + H(+) = adenosine 5'-phosphosulfate + diphosphate. It functions in the pathway sulfur metabolism; hydrogen sulfide biosynthesis; sulfite from sulfate: step 1/3. In terms of biological role, with CysD forms the ATP sulfurylase (ATPS) that catalyzes the adenylation of sulfate producing adenosine 5'-phosphosulfate (APS) and diphosphate, the first enzymatic step in sulfur assimilation pathway. APS synthesis involves the formation of a high-energy phosphoric-sulfuric acid anhydride bond driven by GTP hydrolysis by CysN coupled to ATP hydrolysis by CysD. This is Sulfate adenylyltransferase subunit 1 from Aliarcobacter butzleri (strain RM4018) (Arcobacter butzleri).